Reading from the N-terminus, the 183-residue chain is Auxin-responsive protein IAA20 (183 aa).

2 disordered regions span residues 1 to 23 and 42 to 77; these read MELE…TATA and GFEE…NKRR. Residues 3–7 carry the EAR-like (transcriptional repression) motif; sequence LELGL. The region spanning 98-183 is the PB1 domain; the sequence is GGYVKVKMEG…KSVKRLKILV (86 aa).

Belongs to the Aux/IAA family. As to quaternary structure, homodimers and heterodimers. As to expression, expressed at very low levels in etiolated seedlings and flowers.

The protein localises to the nucleus. Aux/IAA proteins are short-lived transcriptional factors that function as repressors of early auxin response genes at low auxin concentrations. This chain is Auxin-responsive protein IAA20 (IAA20), found in Oryza sativa subsp. japonica (Rice).